A 475-amino-acid chain; its full sequence is Ribulose bisphosphate carboxylase large chain (475 aa).

Substrate is bound by residues N123 and T173. K175 acts as the Proton acceptor in catalysis. K177 provides a ligand contact to substrate. Residues K201, D203, and E204 each contribute to the Mg(2+) site. K201 is modified (N6-carboxylysine). Residue H294 is the Proton acceptor of the active site. Residues R295, H327, and S379 each contribute to the substrate site.

This sequence belongs to the RuBisCO large chain family. Type I subfamily. As to quaternary structure, heterohexadecamer of 8 large chains and 8 small chains. Mg(2+) is required as a cofactor.

It localises to the plastid. The protein resides in the chloroplast. It carries out the reaction 2 (2R)-3-phosphoglycerate + 2 H(+) = D-ribulose 1,5-bisphosphate + CO2 + H2O. The catalysed reaction is D-ribulose 1,5-bisphosphate + O2 = 2-phosphoglycolate + (2R)-3-phosphoglycerate + 2 H(+). Its function is as follows. RuBisCO catalyzes two reactions: the carboxylation of D-ribulose 1,5-bisphosphate, the primary event in carbon dioxide fixation, as well as the oxidative fragmentation of the pentose substrate in the photorespiration process. Both reactions occur simultaneously and in competition at the same active site. This Bigelowiella natans (Pedinomonas minutissima) protein is Ribulose bisphosphate carboxylase large chain.